Here is a 749-residue protein sequence, read N- to C-terminus: EF-hand domain-containing family member C2 (749 aa).

3 DM10 domains span residues 75–182 (DKQV…RKIG), 226–368 (HGKI…KSKY), and 431–538 (KSNI…EQNT). The 36-residue stretch at 558-593 (GKSRELKQVFKAADSKHTNMVDYNTFRDILMSLTVG) folds into the EF-hand domain.

Microtubule inner protein component of sperm flagellar doublet microtubules. In terms of tissue distribution, expressed in airway epithelial cells.

Its subcellular location is the cytoplasm. It localises to the cytoskeleton. It is found in the cilium axoneme. The protein resides in the flagellum axoneme. Microtubule inner protein (MIP) part of the dynein-decorated doublet microtubules (DMTs) in cilia axoneme, which is required for motile cilia beating. The protein is EF-hand domain-containing family member C2 of Homo sapiens (Human).